The sequence spans 155 residues: Small ribosomal subunit protein uS7 (155 aa).

Belongs to the universal ribosomal protein uS7 family. In terms of assembly, part of the 30S ribosomal subunit. Contacts proteins S9 and S11.

One of the primary rRNA binding proteins, it binds directly to 16S rRNA where it nucleates assembly of the head domain of the 30S subunit. Is located at the subunit interface close to the decoding center, probably blocks exit of the E-site tRNA. This Kosmotoga olearia (strain ATCC BAA-1733 / DSM 21960 / TBF 19.5.1) protein is Small ribosomal subunit protein uS7.